A 312-amino-acid polypeptide reads, in one-letter code: Glutathione synthetase (312 aa).

An ATP-grasp domain is found at 125-309 (KIFVTEFPDL…IAALFWDAVE (185 aa)). An ATP-binding site is contributed by 151–207 (RREFGDIILKPLYGNGGAGVFHLADGDRNLTSLLEMFGQLFREPFIAQRYLKDVRAG). Residues E280 and N282 each contribute to the Mg(2+) site.

Belongs to the prokaryotic GSH synthase family. Mg(2+) is required as a cofactor. Requires Mn(2+) as cofactor.

It carries out the reaction gamma-L-glutamyl-L-cysteine + glycine + ATP = glutathione + ADP + phosphate + H(+). It participates in sulfur metabolism; glutathione biosynthesis; glutathione from L-cysteine and L-glutamate: step 2/2. This is Glutathione synthetase from Brucella melitensis biotype 1 (strain ATCC 23456 / CCUG 17765 / NCTC 10094 / 16M).